A 237-amino-acid chain; its full sequence is Early nodulin-like protein 1 (237 aa).

The signal sequence occupies residues 1–28 (MEASRRWPYAAWFMAVLGLVAVFSSSEA). Residues 29–134 (YVFYAGGRDG…GQKLYIIVMA (106 aa)) form the Phytocyanin domain. Asn-59 carries N-linked (GlcNAc...) asparagine glycosylation. A disulfide bridge links Cys-85 with Cys-122. The segment at 139-215 (KPSEAPEPAG…SLGAPPPTSG (77 aa)) is disordered. Composition is skewed to low complexity over residues 140–152 (PSEAPEPAGAAGP) and 201–215 (MSRSSSLGAPPPTSG). Ser-206 carries GPI-anchor amidated serine lipidation. Residues 207–237 (LGAPPPTSGAAGLAGVVASVVVGVLGALLMF) constitute a propeptide, removed in mature form.

This sequence belongs to the early nodulin-like (ENODL) family. Expressed ubiquitously. Accumulates particularly in reproductive tissues, especially in maturing seeds.

It localises to the vacuole. The protein localises to the aleurone grain membrane. Its function is as follows. May act as a carbohydrate transporter. This Oryza sativa subsp. japonica (Rice) protein is Early nodulin-like protein 1.